We begin with the raw amino-acid sequence, 258 residues long: MTTSPLITAKNINHAYGNKTVLNDISLTLHSNEIVTLIGPNGAGKSTLLKILLNLIQPTSGEVTRKTGLRIGFMPQKIQVDASMPLSVQRFLELGLARQSQTLFNKKTNDTTELHEVINDLKLNDLLTHPIQQVSGGEMQRILLARALLRNPELLILDEPVQGVDLQGQTELYHYISEIRDKYGCGILMVSHDLHIVMRSTNKVLCLNQHLCCSGLPQTVSGSPAFQELFGQGFEEVAFYEHHHDDRVCTHTHGHTET.

The region spanning Ile-7–Gly-233 is the ABC transporter domain. Gly-39–Ser-46 provides a ligand contact to ATP.

This sequence belongs to the ABC transporter superfamily. Zinc importer (TC 3.A.1.15.5) family. In terms of assembly, the complex is composed of two ATP-binding proteins (ZnuC), two transmembrane proteins (ZnuB) and a solute-binding protein (ZnuA).

The protein resides in the cell inner membrane. The enzyme catalyses Zn(2+)(out) + ATP(in) + H2O(in) = Zn(2+)(in) + ADP(in) + phosphate(in) + H(+)(in). In terms of biological role, part of the ABC transporter complex ZnuABC involved in zinc import. Responsible for energy coupling to the transport system. The sequence is that of Zinc import ATP-binding protein ZnuC from Hydrogenovibrio crunogenus (strain DSM 25203 / XCL-2) (Thiomicrospira crunogena).